We begin with the raw amino-acid sequence, 416 residues long: Formyl-CoA:oxalate CoA-transferase (416 aa).

Residues 17-18, R38, 72-75, 96-98, H104, and 137-140 contribute to the CoA site; these read QS, LNTK, NFH, and KAYE. Residue D169 is the Nucleophile of the active site. 248-250 is a binding site for substrate; the sequence is GGQ. 273 to 275 is a binding site for CoA; the sequence is QEQ.

This sequence belongs to the CoA-transferase III family. Frc subfamily. In terms of assembly, homodimer.

It catalyses the reaction formyl-CoA + oxalate = oxalyl-CoA + formate. Its pathway is metabolic intermediate degradation; oxalate degradation; CO(2) and formate from oxalate: step 1/2. In terms of biological role, involved in the catabolism of oxalate and in the adapatation to low pH via the induction of the oxalate-dependent acid tolerance response (ATR). Catalyzes the transfer of the CoA moiety from formyl-CoA to oxalate. The protein is Formyl-CoA:oxalate CoA-transferase of Shigella sonnei (strain Ss046).